A 128-amino-acid polypeptide reads, in one-letter code: Protein BEX2 (128 aa).

The interval 1 to 44 (MMPKEEQVLKNLTMENANEENEKKDEKEQDANKGEPLALSLGAG) is disordered. Residues 20–33 (ENEKKDEKEQDANK) are compositionally biased toward basic and acidic residues. An Omega-N-methylarginine modification is found at Arg-50. The tract at residues 103 to 128 (QLSHSLRAVSTDPPHHEHNDEFCLMP) is disordered. The segment covering 115–128 (PPHHEHNDEFCLMP) has biased composition (basic and acidic residues). A his cluster region spans residues 117–121 (HHEHN). A Zn(2+)-binding site is contributed by Cys-125.

This sequence belongs to the BEX family. As to quaternary structure, interacts with LMO2, possibly leading to regulate the transcriptional activity of a DNA-binding complex containing LMO2. Interacts with OMP.

It is found in the cytoplasm. The protein localises to the nucleus. Regulator of mitochondrial apoptosis and G1 cell cycle. Regulates the level of PP2A regulatory subunit B and PP2A phosphatase activity. In absence of reductive stress, acts as a pseudosubstrate for the CRL2(FEM1B) complex: associates with FEM1B via zinc, thereby preventing association between FEM1B and its substrates. This chain is Protein BEX2 (BEX2), found in Bos taurus (Bovine).